The sequence spans 25 residues: GDCGCSGASSCTCASGQCTCSGCGK.

Residues cysteine 3, cysteine 5, cysteine 11, cysteine 13, cysteine 18, cysteine 20, and cysteine 23 each contribute to the Cu(+) site.

It belongs to the metallothionein superfamily. Type 8 family.

Its function is as follows. The metallothioneins are involved in the cellular sequestration of toxic metal ions. Binds six copper (cuprous) ions. This chain is Metallothionein, found in Agaricus bisporus (White button mushroom).